The primary structure comprises 166 residues: Nucleotide-binding protein SUN_0226 (166 aa).

Belongs to the YajQ family.

Functionally, nucleotide-binding protein. The protein is Nucleotide-binding protein SUN_0226 of Sulfurovum sp. (strain NBC37-1).